We begin with the raw amino-acid sequence, 301 residues long: Possible hemolysin C (301 aa).

2 consecutive CBS domains span residues 80 to 142 (MVPR…NGRL) and 145 to 202 (LIRK…IDDE).

This sequence belongs to the UPF0053 family. Hemolysin C subfamily.

This is Possible hemolysin C (tlyC) from Rickettsia akari (strain Hartford).